The following is a 225-amino-acid chain: Putative O-phosphotransferase MT2714 (225 aa).

30–37 (GGSSAGKT) is a binding site for ATP.

To S.violaceus chloramphenicol 3-O phosphotransferase.

The chain is Putative O-phosphotransferase MT2714 from Mycobacterium tuberculosis (strain CDC 1551 / Oshkosh).